Consider the following 140-residue polypeptide: Zinc finger SWIM domain-containing protein 7 (140 aa).

The SWIM-type zinc-finger motif lies at 66-114; it reads YQVLGSSSKTYTCLASCHYCSCPAFAFSVLRKSDSILCKHLLAVYLSQV.

This sequence belongs to the SWS1 family. As to quaternary structure, interacts with RAD51D and XRCC3; involved in homologous recombination repair. Interacts with SWSAP1; they form a functional complex involved in homologous recombination repair and stabilize each other. In terms of tissue distribution, expressed in ovary and testis.

The protein localises to the nucleus. Functionally, involved in early stages of the homologous recombination repair (HRR) pathway of double-stranded DNA breaks arising during DNA replication or induced by DNA-damaging agents. Required for meiotic progression, hence for fertility. This is Zinc finger SWIM domain-containing protein 7 (ZSWIM7) from Homo sapiens (Human).